We begin with the raw amino-acid sequence, 430 residues long: Tyrosine--tRNA ligase (430 aa).

An L-tyrosine-binding site is contributed by Y32. The 'HIGH' region motif lies at 37–46 (PTADSLHIGH). The L-tyrosine site is built by Y172 and Q176. The 'KMSKS' region motif lies at 232–236 (KFGKT). An ATP-binding site is contributed by K235. The S4 RNA-binding domain occupies 362 to 429 (VKAVDLFVDN…GKKNYYLIIA (68 aa)).

Belongs to the class-I aminoacyl-tRNA synthetase family. TyrS type 1 subfamily. As to quaternary structure, homodimer.

The protein localises to the cytoplasm. The enzyme catalyses tRNA(Tyr) + L-tyrosine + ATP = L-tyrosyl-tRNA(Tyr) + AMP + diphosphate + H(+). Functionally, catalyzes the attachment of tyrosine to tRNA(Tyr) in a two-step reaction: tyrosine is first activated by ATP to form Tyr-AMP and then transferred to the acceptor end of tRNA(Tyr). This Bacteroides fragilis (strain YCH46) protein is Tyrosine--tRNA ligase.